Here is a 212-residue protein sequence, read N- to C-terminus: Thymidylate kinase (212 aa).

Gly10–Thr17 is an ATP binding site.

It belongs to the thymidylate kinase family.

It carries out the reaction dTMP + ATP = dTDP + ADP. In terms of biological role, phosphorylation of dTMP to form dTDP in both de novo and salvage pathways of dTTP synthesis. The chain is Thymidylate kinase from Photorhabdus laumondii subsp. laumondii (strain DSM 15139 / CIP 105565 / TT01) (Photorhabdus luminescens subsp. laumondii).